Reading from the N-terminus, the 66-residue chain is Large ribosomal subunit protein uL29 (66 aa).

It belongs to the universal ribosomal protein uL29 family.

In Syntrophobacter fumaroxidans (strain DSM 10017 / MPOB), this protein is Large ribosomal subunit protein uL29.